Consider the following 1807-residue polypeptide: MFGQNNSSGFGGGTGAFGQNNQQTGGLFGSNSNTPGNTLFGSQNTSTTGFGQNTTQPLFGSNTNGGLFGNRNNTTTTGGTGFGMSSGTGMFGQSNTPAFGGTNNATNPSGGGLFGSNTANNNANTGTSFSFGSNAGSTGFGNTASNTGTGGGLFGSQNNAGNTAGNTGFGSQGTGGGLFGSSTTPATTNAFGTSGFVSSNANAVNGTANPPYAVTSEKDPQTNGTSVFQSITCMPAYRSYSFEELRLQDYNQGRRFGNASSTNTTSAFGSTPAFGASTTPFGQNLSGTTNNATPFGTSNATNTTPGSGLFGGGSAFGSNTTNTGFGSGTNNASGGLFGQNNNTTSTPSTGLFGGSTFNQQKPAFSGFGSTTNTTNTGTGTGLFGSNNATNTGTGQTTGGLFGGAATGTGTGFGSSTGGFGSNTNNQPNSGTMGTGLFGFGANNNTANNNTAPTSTFGGNNSSNFSFGANNNAATKPSGFGFGSTTTTPASGGFSFGQNANNAPKPAFGSTATTAPKPAGTGLFGGLGAGANTNTATNATGTGGSLFGNANTAGSNMFGSANSSTPGTGLFGSTQTNNATSNTGTGLFGSNNANTTNTGGSLFNKPSTTTGGLFGNTTAQQPSTTTSGLFGASNTNNQAQTSNFGTGLFGGSQAGQQQQPLQASIDQNPYGNNPLFSSTTSQVAPTSIQEPIASPLTSKPTPKKAASLPQFWLSPRSHNTARLASISSFAKSAVMNSTSASGKPKSLHLFDSLNDDVLLSADAFTPRQNIKKLVITHKISKDDILQNGVKNGNDAKSDSKVQEKAPQNEADGSLKKDEHVVLSDDYWMKPSIEELSKYPKEKLCSVHQFSVGRTGYGQVAFLKPVDLSGFEKLEDIPGKVVVFERKICAVYPVEGSSPPLGEGLNVPAIITLEKTWPLSRETREPIKDPQNPRYIQHVKRLHRIKDTEFIDFNDGKWIFKVQHFSRYGLLDDEEEENDMSSTSNEAGNLKKYDQPNLKVSGKNDSFVTHHTPGAFPNDSKNKELNRHFLKVDDSAPLDDTFMSKKVKLDFSSDSNVSERGDYDDNAKKVDEVISIEKVDGYSKENNVPLSEDDLSNSSESSNESVYSLVEESDASLAADNMDIEDISEESDREELSSMRFGAQDFHGLVVTDNWRDQLNLSVQRSALIKAAFPESQSNANLKNSRGIYYNEHDLVTDIFGNQNLDTDRPWQSLDKPGAFIPSKFHFTANGSCIYVLKSSDVKIRSIYDFIPTKDPNGTKLLEYQLDQTEVYLDLSGTHAASPRSSMTVKPLSLCSSGYESIVWDLTSILFDPKNYSLPSELSSEAREVLYQKLVRESLSEWITKTLEHETTTLAKEAETSEERIYILLTGNLIGQACEEAVQSQNNRLSTLIPLVNSDVDIQQEVKQQLEEWRKHGDLPFINKFTRLIFELLSGNTDIAEGCGTKGDEDYVQSIPITKNMTWLRAFGLKLWYNTDISIGEAMQLYVESLQKFPEIMQKPIATSAVQGIEVYDIIYLLLKAYAMGTSLEELTIPESAKCSPLNYRVVWQLAIYLSKARSLCDFSDRVVDINMAEDLKPISVHSDQLTLAYASQLEASGQWLWSLFVLLHLENVETRTSTITSCLARNLRGGLGAGAVEMIEKLCIPESWLNEAKALYARYVGDHLNELYFLQEAALYEDAHKVLLDTLAPQAVISGNKTQLKKALEGFNGQTDGLASWRFGGQIYSDYLDLLEGNFDANQELKLFTLRKISVALKELNATNLLQKAALHKISRFVNALCNEESLTDAICNLPLPLADSLANLQNISVQF.

The interval 1–118 is disordered; that stretch reads MFGQNNSSGF…SGGGLFGSNT (118 aa). GLFG repeat units lie at residues 26–29 and 66–69; these read GLFG. Residues 29–61 show a composition bias toward polar residues; sequence GSNSNTPGNTLFGSQNTSTTGFGQNTTQPLFGS. A compositionally biased stretch (low complexity) spans 62–77; that stretch reads NTNGGLFGNRNNTTTT. Gly residues predominate over residues 78–90; the sequence is GGTGFGMSSGTGM. The span at 93-108 shows a compositional bias: polar residues; that stretch reads QSNTPAFGGTNNATNP. GLFG repeat units lie at residues 112–115, 152–155, 177–180, 308–311, 335–338, 350–353, 381–384, 399–402, 435–438, and 521–524; these read GLFG. Residues 565–584 show a composition bias toward polar residues; that stretch reads PGTGLFGSTQTNNATSNTGT. The disordered stretch occupies residues 565-685; the sequence is PGTGLFGSTQ…SSTTSQVAPT (121 aa). 4 GLFG repeats span residues 585-588, 611-614, 627-630, and 646-649; these read GLFG. The segment covering 588-600 has biased composition (low complexity); sequence GSNNANTTNTGGS. A compositionally biased stretch (polar residues) spans 603–644; sequence NKPSTTTGGLFGNTTAQQPSTTTSGLFGASNTNNQAQTSNFG. Over residues 653–663 the composition is skewed to low complexity; the sequence is AGQQQQPLQAS. Residues 664-685 show a composition bias toward polar residues; that stretch reads IDQNPYGNNPLFSSTTSQVAPT. Ser-724 is subject to Phosphoserine. Residues 785–814 form a disordered region; that stretch reads QNGVKNGNDAKSDSKVQEKAPQNEADGSLK. A compositionally biased stretch (basic and acidic residues) spans 792–802; the sequence is NDAKSDSKVQE. The Peptidase S59 domain occupies 822–963; that stretch reads SDDYWMKPSI…GKWIFKVQHF (142 aa). Positions 974-1020 are disordered; that stretch reads EENDMSSTSNEAGNLKKYDQPNLKVSGKNDSFVTHHTPGAFPNDSKN. Residue Ser-1051 is modified to Phosphoserine. Positions 1082–1104 are disordered; sequence KENNVPLSEDDLSNSSESSNESV. The segment covering 1094 to 1104 has biased composition (low complexity); that stretch reads SNSSESSNESV.

Belongs to the nucleoporin GLFG family. As to quaternary structure, interacts (via G-L-F-G repeats) with rpn15/dss1. Interacts with raf1. Interacts with ned1. In terms of processing, nup189 is autocatalytically cleaved in nup98 and nup96.

The protein resides in the nucleus. Its subcellular location is the nuclear pore complex. Functions as a component of the nuclear pore complex (NPC). NPC components, collectively referred to as nucleoporins (NUPs), can play the role of both NPC structural components and of docking or interaction partners for transiently associated nuclear transport factors. Active directional transport is assured by both, a Phe-Gly (FG) repeat affinity gradient for these transport factors across the NPC and a transport cofactor concentration gradient across the nuclear envelope. Nup189 is autocatalytically cleaved in vivo in 2 polypeptides which assume different functions in the NPC. Nup98 as one of the FG repeat nucleoporins participates in karyopherin interactions and contains part of the autocatalytic cleavage activity. Nup96 as part of the NUP84 complex is involved in nuclear poly(A)+ RNA and tRNA export. This chain is Nucleoporin nup189 (nup189), found in Schizosaccharomyces pombe (strain 972 / ATCC 24843) (Fission yeast).